A 429-amino-acid polypeptide reads, in one-letter code: Growth/differentiation factor 2 (429 aa).

The signal sequence occupies residues 1–22; it reads MCPGALWVALPLLSLLAGSLQG. Positions 23 to 319 are excised as a propeptide; sequence KPLQSWGRGS…AGSTLARRKR (297 aa). Residues Asn-71 and Asn-136 are each glycosylated (N-linked (GlcNAc...) asparagine). Basic and acidic residues predominate over residues 283 to 301; sequence VLKKLSKDGSTEAGESSHE. The disordered stretch occupies residues 283–308; the sequence is VLKKLSKDGSTEAGESSHEEDTDGHV. Disulfide bonds link Cys-327–Cys-393, Cys-356–Cys-426, and Cys-360–Cys-428. Residues 402 to 416 are interaction with ENG; sequence SVLYKDDMGVPTLKY.

The protein belongs to the TGF-beta family. In terms of assembly, homodimer; disulfide-linked. Detected in extracellular fluid as mature homodimer, and in complex with its propeptide. Interacts with ACVRL1, BMPR2 and ACVR2B with high affinity (in vitro). Identified in a complex with ACVRL1 and ACVR2B. Has ten times lower affinity for ACVR2A (in vitro). Interacts with ENG, forming a heterotetramer with a 2:2 stoichiometry. Can form a heteromeric complex with ENG and ACVRL1. Interacts with type I receptor ACVR1. A reversible disulfide bond can be formed between the two subunits in the homodimer; this has no effect on GDF2 activity. As to expression, detected in blood plasma (at protein level).

It localises to the secreted. Its function is as follows. Potent circulating inhibitor of angiogenesis. Signals through the type I activin receptor ACVRL1 but not other Alks. Signaling through SMAD1 in endothelial cells requires TGF-beta coreceptor endoglin/ENG. This Homo sapiens (Human) protein is Growth/differentiation factor 2 (GDF2).